Reading from the N-terminus, the 172-residue chain is Adenine phosphoribosyltransferase (172 aa).

This sequence belongs to the purine/pyrimidine phosphoribosyltransferase family. Homodimer.

The protein localises to the cytoplasm. The catalysed reaction is AMP + diphosphate = 5-phospho-alpha-D-ribose 1-diphosphate + adenine. It functions in the pathway purine metabolism; AMP biosynthesis via salvage pathway; AMP from adenine: step 1/1. Catalyzes a salvage reaction resulting in the formation of AMP, that is energically less costly than de novo synthesis. This chain is Adenine phosphoribosyltransferase, found in Ligilactobacillus salivarius (strain UCC118) (Lactobacillus salivarius).